Reading from the N-terminus, the 186-residue chain is Large ribosomal subunit protein uL16 (186 aa).

This sequence belongs to the universal ribosomal protein uL16 family.

The sequence is that of Large ribosomal subunit protein uL16 from Nanoarchaeum equitans (strain Kin4-M).